Reading from the N-terminus, the 128-residue chain is Large ribosomal subunit protein uL24 (128 aa).

The interval 105–128 (KAKSRQVGKEKGKYKEETIEKMQE) is disordered.

It belongs to the universal ribosomal protein uL24 family. As to quaternary structure, component of the large ribosomal subunit.

It is found in the cytoplasm. Functionally, component of the large ribosomal subunit. The ribosome is a large ribonucleoprotein complex responsible for the synthesis of proteins in the cell. The protein is Large ribosomal subunit protein uL24 (RPL26) of Gallus gallus (Chicken).